We begin with the raw amino-acid sequence, 304 residues long: Oxygen-dependent coproporphyrinogen-III oxidase (304 aa).

Ser94 contributes to the substrate binding site. A divalent metal cation-binding residues include His98 and His108. Catalysis depends on His108, which acts as the Proton donor. 110–112 (NVR) provides a ligand contact to substrate. Residues His147 and His177 each coordinate a divalent metal cation. Residues 242-277 (YVEFNLVYDRGTLFGLQTGGRTESILMSMPPLVRWE) are important for dimerization. 260-262 (GGR) serves as a coordination point for substrate.

It belongs to the aerobic coproporphyrinogen-III oxidase family. Homodimer. A divalent metal cation is required as a cofactor.

The protein localises to the cytoplasm. The enzyme catalyses coproporphyrinogen III + O2 + 2 H(+) = protoporphyrinogen IX + 2 CO2 + 2 H2O. Its pathway is porphyrin-containing compound metabolism; protoporphyrin-IX biosynthesis; protoporphyrinogen-IX from coproporphyrinogen-III (O2 route): step 1/1. Its function is as follows. Involved in the heme biosynthesis. Catalyzes the aerobic oxidative decarboxylation of propionate groups of rings A and B of coproporphyrinogen-III to yield the vinyl groups in protoporphyrinogen-IX. This is Oxygen-dependent coproporphyrinogen-III oxidase from Shewanella halifaxensis (strain HAW-EB4).